Here is a 591-residue protein sequence, read N- to C-terminus: MKKISLPKIGIRPVIDGRRMGVRESLEEQTMNMAKATAALLTEKLRHACGAAVECVISDTCIAGMAEAAACEEKFSSQNVGLTITVTPCWCYGSETIDMDPTRPKAIWGFNGTERPGAVYLAAALAAHSQKGIPAFSIYGHDVQDADDTSIPADVEEKLLRFARAGLAVASMKGKSYLSLGGVSMGIAGSIVDHNFFESWLGMKVQAVDMTELRRRIDQKIYDEAELEMALAWADKNFRYGEDENNKQYQRNAEQSRAVLRESLLMAMCIRDMMQGNSKLADIGRVEESLGYNAIAAGFQGQRHWTDQYPNGDTAEAILNSSFDWNGVRKPFVVATENDSLNGVAMLMGHQLTGTAQVFADVRTYWSPEAIERVTGHKLDGLAEHGIIHLINSGSAALDGSCKQRDSEGKPTMKPHWEISQQEADACLAATEWCPAIHEYFRGGGYSSRFLTEGGVPFTMTRVNIIKGLGPVLQIAEGWSVELPKDVHDILNKRTNSTWPTTWFAPRLTGKGPFTDVYSVMANWGANHGVLTIGHVGADFITLASMLRIPVCMHNVEETKVYRPSAWAAHGMDIEGQDYRACQNYGPLYKR.

Active-site proton acceptor residues include Glu-337 and Asp-361. Positions 337, 361, and 528 each coordinate Mn(2+).

It belongs to the L-fucose isomerase family. In terms of assembly, homohexamer. It depends on Mn(2+) as a cofactor.

Its subcellular location is the cytoplasm. It catalyses the reaction L-fucose = L-fuculose. It functions in the pathway carbohydrate degradation; L-fucose degradation; L-lactaldehyde and glycerone phosphate from L-fucose: step 1/3. In terms of biological role, converts the aldose L-fucose into the corresponding ketose L-fuculose. The chain is L-fucose isomerase from Escherichia coli (strain UTI89 / UPEC).